We begin with the raw amino-acid sequence, 59 residues long: UPF0391 membrane protein lpp2589 (59 aa).

Helical transmembrane passes span 5–25 and 30–50; these read ALIF…GIAV and IAKI…IMGL.

The protein belongs to the UPF0391 family.

It is found in the cell membrane. The chain is UPF0391 membrane protein lpp2589 from Legionella pneumophila (strain Paris).